Consider the following 276-residue polypeptide: Protein G1 (276 aa).

Disordered stretches follow at residues 1-30 (MSSS…SQKR) and 178-213 (SYHK…ATAP). Residues 21–30 (RPSRYESQKR) are compositionally biased toward basic and acidic residues. Positions 24-183 (RYESQKRRDW…ARGISYHKKK (160 aa)) constitute an ALOG domain. The span at 178–187 (SYHKKKKRRG) shows a compositional bias: basic residues. The short motif at 181-185 (KKKKR) is the Nuclear localization signal element. The span at 189–202 (NMNGARGGGGGGAR) shows a compositional bias: gly residues. Low complexity predominate over residues 203–213 (AGVNDGDATAP).

This sequence belongs to the plant homeotic and developmental regulators ALOG protein family. Expressed at the empty glumes of immature spikelets, which are lemmas of the sterile florets located at the lateral side of the spikelet, throughout their development.

It localises to the nucleus. In terms of biological role, probable transcription regulator that acts as a developmental regulator by promoting cell growth in response to light. Transcription regulator that restrains empty glumes growth, lemmas of the sterile florets located at the lateral side of the rice spikelet, to maintain their small size, probably by repressing lemma identity via transcription regulation. This is Protein G1 (G1) from Oryza sativa subsp. japonica (Rice).